Reading from the N-terminus, the 617-residue chain is Chaperone protein HscA homolog (617 aa).

Belongs to the heat shock protein 70 family.

Functionally, chaperone involved in the maturation of iron-sulfur cluster-containing proteins. Has a low intrinsic ATPase activity which is markedly stimulated by HscB. The protein is Chaperone protein HscA homolog of Vibrio campbellii (strain ATCC BAA-1116).